Here is a 426-residue protein sequence, read N- to C-terminus: Mannose-1-phosphate guanyltransferase alpha-B (426 aa).

The protein belongs to the transferase hexapeptide repeat family.

It carries out the reaction alpha-D-mannose 1-phosphate + GTP + H(+) = GDP-alpha-D-mannose + diphosphate. It functions in the pathway nucleotide-sugar biosynthesis; GDP-alpha-D-mannose biosynthesis; GDP-alpha-D-mannose from alpha-D-mannose 1-phosphate (GTP route): step 1/1. The sequence is that of Mannose-1-phosphate guanyltransferase alpha-B (gmppa-b) from Xenopus laevis (African clawed frog).